We begin with the raw amino-acid sequence, 140 residues long: 3-hydroxyacyl-[acyl-carrier-protein] dehydratase FabZ (140 aa).

Residue histidine 47 is part of the active site.

The protein belongs to the thioester dehydratase family. FabZ subfamily.

The protein resides in the cytoplasm. The catalysed reaction is a (3R)-hydroxyacyl-[ACP] = a (2E)-enoyl-[ACP] + H2O. Functionally, involved in unsaturated fatty acids biosynthesis. Catalyzes the dehydration of short chain beta-hydroxyacyl-ACPs and long chain saturated and unsaturated beta-hydroxyacyl-ACPs. This Streptococcus sanguinis (strain SK36) protein is 3-hydroxyacyl-[acyl-carrier-protein] dehydratase FabZ.